The sequence spans 73 residues: Translation initiation factor IF-1 (73 aa).

The region spanning 1 to 73 (MDIKEEAIET…TKGRIVYREK (73 aa)) is the S1-like domain.

This sequence belongs to the IF-1 family. Component of the 30S ribosomal translation pre-initiation complex which assembles on the 30S ribosome in the order IF-2 and IF-3, IF-1 and N-formylmethionyl-tRNA(fMet); mRNA recruitment can occur at any time during PIC assembly.

Its subcellular location is the cytoplasm. In terms of biological role, one of the essential components for the initiation of protein synthesis. Stabilizes the binding of IF-2 and IF-3 on the 30S subunit to which N-formylmethionyl-tRNA(fMet) subsequently binds. Helps modulate mRNA selection, yielding the 30S pre-initiation complex (PIC). Upon addition of the 50S ribosomal subunit IF-1, IF-2 and IF-3 are released leaving the mature 70S translation initiation complex. The polypeptide is Translation initiation factor IF-1 (Borreliella afzelii (strain PKo) (Borrelia afzelii)).